A 241-amino-acid chain; its full sequence is Glucosamine-6-phosphate deaminase (241 aa).

Asp67 acts as the Proton acceptor; for enolization step in catalysis. The active-site For ring-opening step is the Asn136. The active-site Proton acceptor; for ring-opening step is His138. Glu143 (for ring-opening step) is an active-site residue.

It belongs to the glucosamine/galactosamine-6-phosphate isomerase family. NagB subfamily.

The catalysed reaction is alpha-D-glucosamine 6-phosphate + H2O = beta-D-fructose 6-phosphate + NH4(+). The protein operates within amino-sugar metabolism; N-acetylneuraminate degradation; D-fructose 6-phosphate from N-acetylneuraminate: step 5/5. Catalyzes the reversible isomerization-deamination of glucosamine 6-phosphate (GlcN6P) to form fructose 6-phosphate (Fru6P) and ammonium ion. This Bacillus pumilus (strain SAFR-032) protein is Glucosamine-6-phosphate deaminase.